We begin with the raw amino-acid sequence, 207 residues long: 3-demethoxyubiquinol 3-hydroxylase (207 aa).

Fe cation is bound by residues glutamate 56, glutamate 86, histidine 89, glutamate 138, glutamate 170, and histidine 173.

This sequence belongs to the COQ7 family. The cofactor is Fe cation.

Its subcellular location is the cell membrane. It catalyses the reaction a 5-methoxy-2-methyl-3-(all-trans-polyprenyl)benzene-1,4-diol + AH2 + O2 = a 3-demethylubiquinol + A + H2O. It functions in the pathway cofactor biosynthesis; ubiquinone biosynthesis. Catalyzes the hydroxylation of 2-nonaprenyl-3-methyl-6-methoxy-1,4-benzoquinol during ubiquinone biosynthesis. The protein is 3-demethoxyubiquinol 3-hydroxylase of Cupriavidus pinatubonensis (strain JMP 134 / LMG 1197) (Cupriavidus necator (strain JMP 134)).